Consider the following 238-residue polypeptide: Sugar fermentation stimulation protein homolog (238 aa).

This sequence belongs to the SfsA family.

The chain is Sugar fermentation stimulation protein homolog from Alteromonas mediterranea (strain DSM 17117 / CIP 110805 / LMG 28347 / Deep ecotype).